Reading from the N-terminus, the 110-residue chain is UPF0060 membrane protein MT2717 (110 aa).

4 consecutive transmembrane segments (helical) span residues 6–26 (ILLF…VWQG), 32–52 (GWLW…FATL), 61–81 (VLAA…MALD), and 90–110 (VIGA…PRGH).

Belongs to the UPF0060 family.

It is found in the cell membrane. The chain is UPF0060 membrane protein MT2717 from Mycobacterium tuberculosis (strain CDC 1551 / Oshkosh).